A 575-amino-acid polypeptide reads, in one-letter code: Isocitrate dehydrogenase kinase/phosphatase (575 aa).

Residues 315–321 (APGVKGM) and Lys336 contribute to the ATP site. Residue Asp371 is part of the active site.

Belongs to the AceK family.

The protein localises to the cytoplasm. The catalysed reaction is L-seryl-[isocitrate dehydrogenase] + ATP = O-phospho-L-seryl-[isocitrate dehydrogenase] + ADP + H(+). Functionally, bifunctional enzyme which can phosphorylate or dephosphorylate isocitrate dehydrogenase (IDH) on a specific serine residue. This is a regulatory mechanism which enables bacteria to bypass the Krebs cycle via the glyoxylate shunt in response to the source of carbon. When bacteria are grown on glucose, IDH is fully active and unphosphorylated, but when grown on acetate or ethanol, the activity of IDH declines drastically concomitant with its phosphorylation. This is Isocitrate dehydrogenase kinase/phosphatase from Yersinia enterocolitica serotype O:8 / biotype 1B (strain NCTC 13174 / 8081).